Consider the following 224-residue polypeptide: Octanoyltransferase (224 aa).

Residues 38-213 (AETTDEVWLL…QFVRAAGFQS (176 aa)) form the BPL/LPL catalytic domain. Residues 77–84 (RGGQVTYH), 144–146 (SLG), and 157–159 (GLA) contribute to the substrate site. Cys-175 functions as the Acyl-thioester intermediate in the catalytic mechanism.

Belongs to the LipB family.

It is found in the cytoplasm. The catalysed reaction is octanoyl-[ACP] + L-lysyl-[protein] = N(6)-octanoyl-L-lysyl-[protein] + holo-[ACP] + H(+). It participates in protein modification; protein lipoylation via endogenous pathway; protein N(6)-(lipoyl)lysine from octanoyl-[acyl-carrier-protein]: step 1/2. Functionally, catalyzes the transfer of endogenously produced octanoic acid from octanoyl-acyl-carrier-protein onto the lipoyl domains of lipoate-dependent enzymes. Lipoyl-ACP can also act as a substrate although octanoyl-ACP is likely to be the physiological substrate. This chain is Octanoyltransferase, found in Hahella chejuensis (strain KCTC 2396).